Consider the following 310-residue polypeptide: Putative HTH-type transcriptional regulatory protein YN1551_1579 (310 aa).

Residues 125-180 form the HTH cro/C1-type domain; it reads LKHKREEMGYSIGDVAKFLGVSRKAIYDYEKGDSDVSLEVAEKLIDLFGDDIIGDV. The segment at residues 136 to 155 is a DNA-binding region (H-T-H motif); the sequence is IGDVAKFLGVSRKAIYDYEK.

This Saccharolobus islandicus (strain Y.N.15.51 / Yellowstone #2) (Sulfolobus islandicus) protein is Putative HTH-type transcriptional regulatory protein YN1551_1579.